A 138-amino-acid polypeptide reads, in one-letter code: MSGTLLAFDFGTKSIGVAIGQRVTATARPLTAIKAQNGNPDWTLIEKLLKEWQPDDVIVGLPLNMDGTEQPLTARARTFANRLHGRFGIKVTLHDERLSTVEARAGLFERGGFRALNKGSVDSASAVVILESYFEQHG.

This sequence belongs to the YqgF nuclease family.

It localises to the cytoplasm. In terms of biological role, could be a nuclease involved in processing of the 5'-end of pre-16S rRNA. The chain is Putative pre-16S rRNA nuclease from Cronobacter sakazakii (strain ATCC BAA-894) (Enterobacter sakazakii).